A 21-amino-acid chain; its full sequence is Fibrinogen beta chain (21 aa).

Q1 bears the Pyrrolidone carboxylic acid mark. The segment covering 1 to 11 (QPSYDYDEEED) has biased composition (acidic residues). The tract at residues 1–21 (QPSYDYDEEEDDRAKLRLDAR) is disordered. Y6 carries the post-translational modification Sulfotyrosine. The span at 12-21 (DRAKLRLDAR) shows a compositional bias: basic and acidic residues.

As to quaternary structure, heterohexamer; disulfide linked. Contains 2 sets of 3 non-identical chains (alpha, beta and gamma). The 2 heterotrimers are in head to head conformation with the N-termini in a small central domain. In terms of processing, conversion of fibrinogen to fibrin is triggered by thrombin, which cleaves fibrinopeptides A and B from alpha and beta chains, and thus exposes the N-terminal polymerization sites responsible for the formation of the soft clot.

The protein resides in the secreted. Functionally, cleaved by the protease thrombin to yield monomers which, together with fibrinogen alpha (FGA) and fibrinogen gamma (FGG), polymerize to form an insoluble fibrin matrix. Fibrin has a major function in hemostasis as one of the primary components of blood clots. In addition, functions during the early stages of wound repair to stabilize the lesion and guide cell migration during re-epithelialization. Was originally thought to be essential for platelet aggregation, based on in vitro studies using anticoagulated blood. However subsequent studies have shown that it is not absolutely required for thrombus formation in vivo. Enhances expression of SELP in activated platelets. Maternal fibrinogen is essential for successful pregnancy. Fibrin deposition is also associated with infection, where it protects against IFNG-mediated hemorrhage. May also facilitate the antibacterial immune response via both innate and T-cell mediated pathways. This chain is Fibrinogen beta chain (FGB), found in Antilocapra americana (Pronghorn).